We begin with the raw amino-acid sequence, 258 residues long: Very-long-chain aldehyde decarbonylase GL1-9 (258 aa).

5 helical membrane passes run 13-33 (MGTF…QLVL), 63-83 (GVLL…MVTS), 88-108 (VVVQ…MLVM), 149-169 (PLEG…VSGM), and 175-195 (VFFF…LWLP). The Fatty acid hydroxylase domain occupies 101-237 (FLVAMLVMDS…FSIWDRILGT (137 aa)).

It belongs to the sterol desaturase family. As to quaternary structure, homodimer.

It localises to the endoplasmic reticulum membrane. It carries out the reaction a long-chain fatty aldehyde + 2 NADPH + O2 + H(+) = a long-chain alkane + formate + 2 NADP(+) + H2O. Functionally, aldehyde decarbonylase involved in the conversion of aldehydes to alkanes. Core component of a very-long-chain alkane synthesis complex. This is Very-long-chain aldehyde decarbonylase GL1-9 from Oryza sativa subsp. indica (Rice).